A 305-amino-acid polypeptide reads, in one-letter code: MSAKTAVLLMAYGTPNRIDEVEQYYINVRGGRMPTPEQVENLSARYRAVGGHTPLTTLTKSVTDQLQAQLDAEFPDQYQVYFGMKYWHPLIPDVVKQIHADGISKVIGLALAPHYSKISIGGYQKQVDRANEEFNTNIELTMINSWQEQPKFRNLIANRISEALAQFPADVRDQVTVLFSAHSLPQRVLAWGDPYPDELLGSAKGIAEMLELPDWRFTYQSQGETGEPWLGPDVLDTLAELAAEGKKYVLQVPFGFVCDHLEILYDIDIEGKHKANELGLQLERIRLLNDDPAFVDLLKTVVTGQ.

H182 and E262 together coordinate Fe cation.

This sequence belongs to the ferrochelatase family.

The protein resides in the cytoplasm. It catalyses the reaction heme b + 2 H(+) = protoporphyrin IX + Fe(2+). It functions in the pathway porphyrin-containing compound metabolism; protoheme biosynthesis; protoheme from protoporphyrin-IX: step 1/1. Catalyzes the ferrous insertion into protoporphyrin IX. The chain is Ferrochelatase from Herpetosiphon aurantiacus (strain ATCC 23779 / DSM 785 / 114-95).